Here is a 464-residue protein sequence, read N- to C-terminus: MAFRIEKDTMGEVQVLADKYWAAQTERSRNNFKIGPAASMPHEIIEAFGYLKKAAAFANHDLGVLPLEKRDLIALACDEILANKLDDQFPLVIWQTGSGTQSNMNVNEVVANRAHVLNGGKLGEKSIIHPNDDVNKSQSSNDTFPTAMHIAAYKKVVEHTIPCVERLQKTFAAKSEAFKNVVKIGRTHLMDATPLTLGQEFSAYAAQLDFGLKALKNTLPHLSQLALGGTAVGTGLNTPKGYDLKVVDYIAKFTALPFVTADNKFEALAAHDAIVETHGALRQLAMSLFKIANDIRLLASGPRSGIGEILIPENEPGSSIMPGKVNPTQCEXMTMVCAQVFGNDTTIAFVGSQGHFQLNVFNPVMIANFLQSAQLLGDACVSFDEHCAVGIEPNYPRIKQQLENSLMLVTALNTHIGYENAAKIAKTAHKNGTTLREEAINLGLVSAEDFDKWVRPEDMVGSLK.

Residues 98–100 (SGT), 129–132 (HPND), 139–141 (SSN), and T187 contribute to the substrate site. H188 serves as the catalytic Proton donor/acceptor. The active site involves S318. Substrate-binding positions include S319 and 324–326 (KVN).

This sequence belongs to the class-II fumarase/aspartase family. Fumarase subfamily. As to quaternary structure, homotetramer.

The protein resides in the cytoplasm. The enzyme catalyses (S)-malate = fumarate + H2O. It participates in carbohydrate metabolism; tricarboxylic acid cycle; (S)-malate from fumarate: step 1/1. Its function is as follows. Involved in the TCA cycle. Catalyzes the stereospecific interconversion of fumarate to L-malate. The polypeptide is Fumarate hydratase class II (Haemophilus influenzae (strain ATCC 51907 / DSM 11121 / KW20 / Rd)).